Consider the following 223-residue polypeptide: Trichome differentiation protein GL1 (223 aa).

HTH myb-type domains follow at residues 11–63 and 64–118; these read NQEY…MNYL and SPNV…SKKL. 2 consecutive DNA-binding regions (H-T-H motif) follow at residues 39-63 and 91-114; these read WNRI…MNYL and WSLI…NTHL.

The protein localises to the nucleus. Its function is as follows. Regulates the production of a signal that induces hair (trichome) precursor cells on leaf primordia to differentiate. This Arabidopsis lyrata (Lyre-leaved rock-cress) protein is Trichome differentiation protein GL1 (GL1).